A 563-amino-acid polypeptide reads, in one-letter code: Arginine--tRNA ligase (563 aa).

Positions 121 to 131 (PNIAKPFSIGH) match the 'HIGH' region motif.

The protein belongs to the class-I aminoacyl-tRNA synthetase family. As to quaternary structure, monomer.

It is found in the cytoplasm. It catalyses the reaction tRNA(Arg) + L-arginine + ATP = L-arginyl-tRNA(Arg) + AMP + diphosphate. The polypeptide is Arginine--tRNA ligase (Streptococcus pyogenes serotype M49 (strain NZ131)).